Reading from the N-terminus, the 966-residue chain is MEPQVTLNVTFKNEIQSFLVSDPENTTWADIEAMVKVSFDLNTIQIKYLDEENEEVSINSQGEYEEALKMAVKQGNQLQMQVHEGHHVVDEAPPPVVGAKRLAARAGKKPLAHYSSLVRVLGSDMKTPEDPAVQSFPLVPCDTDQPQDKPPDWFTSYLETFREQVVNETVEKLEQKLHEKLVLQNPSLGSCPSEVSMPTSEETLFLPENQFSWHIACNNCQRRIVGVRYQCSLCPSYNICEDCEAGPYGHDTNHVLLKLRRPVVGSSEPFCHSKYSTPRLPAALEQVRLQKQVDKNFLKAEKQRLRAEKKQRKAEVKELKKQLKLHRKIHLWNSIHGLQSPKSPLGRPESLLQSNTLMLPLQPCTSVMPMLSAAFVDENLPDGTHLQPGTKFIKHWRMKNTGNVKWSADTKLKFMWGNLTLASTEKKDVLVPCLKAGHVGVVSVEFIAPALEGTYTSHWRLSHKGQQFGPRVWCSIIVDPFPSEESPDNIEKGMISSSKTDDLTCQQEETFLLAKEERQLGEVTEQTEGTAACIPQKAKNVASERELYIPSVDLLTAQDLLSFELLDINIVQELERVPHNTPVDVTPCMSPLPHDSPLIEKPGLGQIEEENEGAGFKALPDSMVSVKRKAENIASVEEAEEDLSGTQFVCETVIRSLTLDAAPDHNPPCRQKSLQMTFALPEGPLGNEKEEIIHIAEEEAVMEEEEDEEDEEEEDELKDEVQSQSSASSEDYIIILPECFDTSRPLGDSMYSSALSQPGLERGAEGKPGVEAGQEPAEAGERLPGGENQPQEHSISDILTTSQTLETVPLIPEVVELPPSLPRSSPCVHHHGSPGVDLPVTIPEVSSVPDQIRGEPRGSSGLVNSRQKSYDHSRHHHGSSIAGGLVKGALSVAASAYKALFAGPPVTAQPIISEDQTAALMAHLFEMGFCDRQLNLRLLKKHNYNILQVVTELLQLNNNDWYSQRY.

The region spanning 4–85 is the PB1 domain; the sequence is QVTLNVTFKN…NQLQMQVHEG (82 aa). Serine 116 bears the Phosphoserine mark. The segment at 212 to 264 adopts a ZZ-type zinc-finger fold; that stretch reads SWHIACNNCQRRIVGVRYQCSLCPSYNICEDCEAGPYGHDTNHVLLKLRRPVV. Zn(2+) is bound by residues cysteine 217, cysteine 220, cysteine 231, cysteine 234, cysteine 240, cysteine 243, histidine 250, and histidine 254. An ATG8 family protein-binding region spans residues 542-636; it reads ASERELYIPS…KRKAENIASV (95 aa). Threonine 586 carries the post-translational modification Phosphothreonine; by GSK3-alpha. Phosphoserine is present on residues serine 590, serine 596, and serine 625. The span at 699 to 718 shows a compositional bias: acidic residues; that stretch reads EAVMEEEEDEEDEEEEDELK. Disordered regions lie at residues 699–728, 750–792, and 848–879; these read EAVM…SSAS, MYSS…QPQE, and VPDQ…HHGS. The ATG8 family protein-binding stretch occupies residues 727–738; sequence ASSEDYIIILPE. A UBA domain is found at 913–957; it reads SEDQTAALMAHLFEMGFCDRQLNLRLLKKHNYNILQVVTELLQLN.

Homooligomer and heterooligomer. Interacts with TRIM55. Interacts with titin/TTN. Interacts with RNF29, USP8, MAP1LC3A, MAP1LC3B, MAP1LC3C, GABARAP, GABARAPL1 and GABARAPL2. Binds to ubiquitin and ubiquitinated proteins. Interacts with SQSTM1. Interacts with TAX1BP1. Interacts with IRF3; this interaction mediates autophagic degradation of IRF3. Interacts with IL12A and IL12B. In terms of assembly, (Microbial infection) Interacts with Influenza A virus protein PB1; this interaction promotes NBR1-mediated selective autophagic degradation of MAVS. In terms of processing, (Microbial infection) Cleaved by S.pyogenes SpeB protease; leading to its degradation. Degradation by SpeB prevents autophagy, promoting to S.pyogenes intracellular replication. Post-translationally, phosphorylated by GSK3A; this phosphorylation inhibits NBR1 involvement in the formation of ubiquitinated protein aggregates.

It is found in the cytoplasm. The protein localises to the cytoplasmic vesicle. The protein resides in the autophagosome. It localises to the lysosome. Its subcellular location is the myofibril. It is found in the sarcomere. The protein localises to the m line. In terms of biological role, ubiquitin-binding autophagy adapter that participates in different processes including host defense or intracellular homeostasis. Possesses a double function during the selective autophagy by acting as a shuttle bringing ubiquitinated proteins to autophagosomes and also by participating in the formation of protein aggregates. Plays a role in the regulation of the innate immune response by modulating type I interferon production and targeting ubiquitinated IRF3 for autophagic degradation. In response to oxidative stress, promotes an increase in SQSTM1 levels, phosphorylation, and body formation by preventing its autophagic degradation. In turn, activates the KEAP1-NRF2/NFE2L2 antioxidant pathway. Also plays non-autophagy role by mediating the shuttle of IL-12 to late endosome for subsequent secretion. The chain is Next to BRCA1 gene 1 protein (NBR1) from Homo sapiens (Human).